The chain runs to 338 residues: Ribosomal RNA small subunit methyltransferase H (338 aa).

Residues 46–48, Asp63, Phe90, Asp106, and Gln113 contribute to the S-adenosyl-L-methionine site; that span reads GGY.

This sequence belongs to the methyltransferase superfamily. RsmH family.

It is found in the cytoplasm. It carries out the reaction cytidine(1402) in 16S rRNA + S-adenosyl-L-methionine = N(4)-methylcytidine(1402) in 16S rRNA + S-adenosyl-L-homocysteine + H(+). Specifically methylates the N4 position of cytidine in position 1402 (C1402) of 16S rRNA. This chain is Ribosomal RNA small subunit methyltransferase H, found in Mesorhizobium japonicum (strain LMG 29417 / CECT 9101 / MAFF 303099) (Mesorhizobium loti (strain MAFF 303099)).